A 563-amino-acid chain; its full sequence is MADYNTLYHQGLYLSPDQQDLLLAALSSNQPPQKQQNDKQRSQAKTDPDSTPGNMSSGSFSMSPGFNKTHPGSGGLGYGDDESPFLDFNPELDFDFPGSENLIGDLPGSLPSEEHEVGEKRKDMSDNENEESGKKRRESDDKAAKKPGRKPLTSEPTSKRKAQNRAAQRAFRERKEKHLKDLETKVDELQKASDDANQENGLLRAQVERLQVELREYRKRLSWLTTGSGISAMSAIPSAHSRNLYGLNNNDFMFDFPKFGDLPGGHIFNGPLTKSNQNKPRDGSSPATSDSQVPGVMTRETLNGSNNRGMPTAKAANGVSNNPSPKVPSVYNIRQSASSHDSSNSCSPSSSSDSHQSQMLSSNGTSPEPSSNSPATKLNDSVQNHHACTYSTIDAVRGKSESVSNTPSQPNNNYEQTPGPGLDLLAQQNGGQFDPVLFGDWREPQDAILSQDFGTFFDDAFPLPDLGSPSHNFNEVANPQPPKKDLIAEIDNKLDEEVVPGEDKSQMLSCTKIWDRLQSMEKFRNGEIDVDNLCSELRTKARCSEGGVVVNQKDVEDIMGRVK.

The segment at 23–179 is disordered; the sequence is LAALSSNQPP…AFRERKEKHL (157 aa). Positions 35–42 match the Bipartite nuclear localization signal motif; sequence QQNDKQRS. Positions 36–48 are enriched in basic and acidic residues; the sequence is QNDKQRSQAKTDP. A compositionally biased stretch (low complexity) spans 52 to 67; the sequence is PGNMSSGSFSMSPGFN. The Bipartite nuclear localization signal signature appears at 68–75; it reads KTHPGSGG. Over residues 79-94 the composition is skewed to acidic residues; the sequence is GDDESPFLDFNPELDF. Composition is skewed to basic and acidic residues over residues 112–144 and 170–179; these read SEEH…DKAA and AFRERKEKHL. Residues 154–217 enclose the bZIP domain; sequence SEPTSKRKAQ…ERLQVELREY (64 aa). The interval 159–180 is basic motif; the sequence is KRKAQNRAAQRAFRERKEKHLK. Residues 182-189 form a leucine-zipper region; it reads LETKVDEL. Positions 211–332 are transcription activation 1; that stretch reads QVELREYRKR…PSPKVPSVYN (122 aa). 2 disordered regions span residues 267–380 and 394–420; these read IFNG…KLND and DAVR…TPGP. Residues 284–296 are n-CRD; it reads SSPATSDSQVPGV. Over residues 300–309 the composition is skewed to polar residues; that stretch reads ETLNGSNNRG. A compositionally biased stretch (low complexity) spans 336–362; the sequence is SASSHDSSNSCSPSSSSDSHQSQMLSS. Polar residues-rich tracts occupy residues 363–380 and 401–416; these read NGTS…KLND and ESVS…NYEQ. The transcription activation 2 stretch occupies residues 377-459; that stretch reads KLNDSVQNHH…SQDFGTFFDD (83 aa). Intrachain disulfides connect Cys-510/Cys-534, Cys-510/Cys-543, and Cys-534/Cys-543. A c-CRD region spans residues 510–543; sequence CTKIWDRLQSMEKFRNGEIDVDNLCSELRTKARC. The short motif at 528–535 is the Nuclear export signal element; sequence IDVDNLCS.

It belongs to the bZIP family. YAP subfamily. In terms of processing, depending on the oxidative stress inducing agent, yap1 can undergo two distinct conformational changes, both involving disulfide bond formation, and both masking the nuclear export signal, thus abolishing nuclear export.

It is found in the nucleus. Its subcellular location is the cytoplasm. Its function is as follows. Transcription activator involved in oxidative stress response and redox homeostasis. Regulates the transcription of genes encoding antioxidant enzymes and components of the cellular thiol-reducing pathways. The protein is AP-1-like transcription factor yap1 of Aspergillus oryzae (strain ATCC 42149 / RIB 40) (Yellow koji mold).